Consider the following 44-residue polypeptide: Conotoxin Rg11a (44 aa).

4 disulfide bridges follow: Cys1-Cys15, Cys8-Cys22, Cys14-Cys30, and Cys21-Cys36.

Expressed by the venom duct.

The protein resides in the secreted. Its function is as follows. Neurotoxin. Elicits hypersensibility when injected intracranially in mice. May act via potassium channel currents. The protein is Conotoxin Rg11a of Conus regius (Crown cone).